The primary structure comprises 241 residues: 1-(5-phosphoribosyl)-5-[(5-phosphoribosylamino)methylideneamino] imidazole-4-carboxamide isomerase (241 aa).

The Proton acceptor role is filled by Asp10. Catalysis depends on Asp131, which acts as the Proton donor.

Belongs to the HisA/HisF family.

The protein resides in the cytoplasm. It carries out the reaction 1-(5-phospho-beta-D-ribosyl)-5-[(5-phospho-beta-D-ribosylamino)methylideneamino]imidazole-4-carboxamide = 5-[(5-phospho-1-deoxy-D-ribulos-1-ylimino)methylamino]-1-(5-phospho-beta-D-ribosyl)imidazole-4-carboxamide. It participates in amino-acid biosynthesis; L-histidine biosynthesis; L-histidine from 5-phospho-alpha-D-ribose 1-diphosphate: step 4/9. The protein is 1-(5-phosphoribosyl)-5-[(5-phosphoribosylamino)methylideneamino] imidazole-4-carboxamide isomerase of Bifidobacterium adolescentis (strain ATCC 15703 / DSM 20083 / NCTC 11814 / E194a).